The chain runs to 422 residues: Adhesin YadA (422 aa).

Residues 1 to 25 (MTKDFKISVSAALISALFSSPYAFA) form the signal peptide. The surface exposed passenger domain stretch occupies residues 26-330 (NNDEVHFTAV…KKAIRESNQY (305 aa)). Residues 216–362 (EKTQENANKK…LASSAALNSL (147 aa)) adopt a coiled-coil conformation. The outer membrane translocation of the passenger domain stretch occupies residues 331 to 369 (TDHKFHQLDNRLDKLDTRVDKGLASSAALNSLFQPYGVG). 4 beta stranded membrane passes run 369–379 (GKVNFTAGVGG), 383–394 (SQALAIGSGYRV), 401–407 (KAGVAYA), and 411–422 (DVMYNASFNIEW). The interval 370–422 (KVNFTAGVGGYRSSQALAIGSGYRVNESVALKAGVAYAGSSDVMYNASFNIEW) is translocator domain.

It belongs to the autotransporter-2 (AT-2) (TC 1.B.40) family. Homotrimer.

It localises to the cell surface. Its subcellular location is the cell outer membrane. Its function is as follows. Collagen-binding outer membrane protein forming a fibrillar matrix on the bacterial cell surface. Promotes initial attachment and invasion of eukaryotic cells. Also protects the bacteria by being responsible for agglutination, serum resistance, complement inactivation and phagocytosis resistance. This Yersinia enterocolitica protein is Adhesin YadA (yadA).